Consider the following 498-residue polypeptide: Ribose import ATP-binding protein RbsA (498 aa).

ABC transporter domains follow at residues 2 to 237 (LALQ…VGRD) and 247 to 491 (VTPG…TGQQ). 34 to 41 (GENGAGKS) is a binding site for ATP.

This sequence belongs to the ABC transporter superfamily. Ribose importer (TC 3.A.1.2.1) family. In terms of assembly, the complex is composed of an ATP-binding protein (RbsA), two transmembrane proteins (RbsC) and a solute-binding protein (RbsB).

The protein localises to the cell membrane. It carries out the reaction D-ribose(out) + ATP + H2O = D-ribose(in) + ADP + phosphate + H(+). In terms of biological role, part of the ABC transporter complex RbsABC involved in ribose import. Responsible for energy coupling to the transport system. The sequence is that of Ribose import ATP-binding protein RbsA from Deinococcus geothermalis (strain DSM 11300 / CIP 105573 / AG-3a).